The chain runs to 600 residues: MAKEIILGIDLGTTNSVVAIIENQKPVVLENPNGKTTTPSVVAFKNNEEIVGDAAKRQLETNPEAIASIKRLMGTDKTVRANERDYKPEEISAKILAYLKEYAEKKIGHKVTKAVITVPAYFDNAQREATKNAGKIAGLQVERIINEPTAAALAFGLDKTEKEMKVLVYDLGGGTFDVSVLELSGGTFEVLSTSGDNHLGGDDWDNEIVNWLVKKIKEEYDFDPKSDKMALTRLKEEAEKTKINLSNQSVSTVSLPFLGMGKNGPINVELELKRSEFEKMTAHLIDRTRKPIVDALKQAKIEASDLDEVLLVGGSTRMPAVQSMIEHTLNKKPNRSINPDEVVAIGAAIQGGVLAGEISDVLLLDVTPLTLGIETLGGIATPLIPRNTTIPVTKSQIFSTAEDNQTEVTISVVQGERQLAADNKMLGRFNLSGIEAAPRGLPQIEVSFSIDVNGITTVSAKDKKTGKEQTITIKNTSTLSEEEINKMIQEAEENREADALKKDKIETTVRAEGLINQLEKSITDQGEKIDPKQKELLEKQIQELKDLLKEEKTDELKLKLDQIEAAAQSFAQATAQQANTSESDPKADDSNTIDAEIKQD.

At Thr175 the chain carries Phosphothreonine; by autocatalysis. Low complexity predominate over residues 569–578 (SFAQATAQQA). Positions 569 to 600 (SFAQATAQQANTSESDPKADDSNTIDAEIKQD) are disordered. Basic and acidic residues predominate over residues 583–600 (SDPKADDSNTIDAEIKQD).

The protein belongs to the heat shock protein 70 family.

In terms of biological role, acts as a chaperone. This chain is Chaperone protein DnaK, found in Mesomycoplasma hyopneumoniae (strain J / ATCC 25934 / NCTC 10110) (Mycoplasma hyopneumoniae).